Consider the following 469-residue polypeptide: Glutamate--tRNA ligase (469 aa).

Residues 9–19 carry the 'HIGH' region motif; it reads PSPTGFLHVGG. Residues Cys-98, Cys-100, Cys-125, and Asp-127 each contribute to the Zn(2+) site. The 'KMSKS' region signature appears at 236–240; that stretch reads KLSKR. An ATP-binding site is contributed by Lys-239.

It belongs to the class-I aminoacyl-tRNA synthetase family. Glutamate--tRNA ligase type 1 subfamily. In terms of assembly, monomer. The cofactor is Zn(2+).

The protein resides in the cytoplasm. The catalysed reaction is tRNA(Glu) + L-glutamate + ATP = L-glutamyl-tRNA(Glu) + AMP + diphosphate. Functionally, catalyzes the attachment of glutamate to tRNA(Glu) in a two-step reaction: glutamate is first activated by ATP to form Glu-AMP and then transferred to the acceptor end of tRNA(Glu). The sequence is that of Glutamate--tRNA ligase from Shewanella sp. (strain ANA-3).